We begin with the raw amino-acid sequence, 582 residues long: Histone deacetylase 9-B (582 aa).

The interaction with mef2 stretch occupies residues 146 to 195; that stretch reads SNEVKQKLQEFLLSKSTKDITLNGIPQKITQSSKLWYTASHHTSLEQSSP. Residues 189–205 show a composition bias toward polar residues; the sequence is SLEQSSPPLGGASSSCK. Disordered stretches follow at residues 189–254, 270–314, 409–447, and 496–567; these read SLEQ…KEGN, TASS…QSRL, LSSGQSPVHPPSPLAMMENSPSSTRPKLPRHRPLNRTQS, and VHLQ…NQSS. Composition is skewed to basic and acidic residues over residues 213–224 and 238–253; these read DYRDDFPLRKTV and KVAERRSSPLLRRKEG. Residues 270–289 are compositionally biased toward low complexity; sequence TASSSAPGSGPSSPNGACSA. The segment covering 295-314 has biased composition (polar residues); that stretch reads GPSSLPVTTRTERWPSQSRL.

This sequence belongs to the histone deacetylase family. HD type 2 subfamily. In terms of assembly, homodimer. Interacts with mef2.

It is found in the nucleus. The catalysed reaction is N(6)-acetyl-L-lysyl-[histone] + H2O = L-lysyl-[histone] + acetate. Devoided of intrinsic deacetylase activity, promotes the deacetylation of lysine residues on the N-terminal part of the core histones (H2A, H2B, H3 and H4) by recruiting other histone deacetylases. Histone deacetylation gives a tag for epigenetic repression and plays an important role in transcriptional regulation, cell cycle progression and developmental events. Represses MEF2-dependent transcription. The chain is Histone deacetylase 9-B (hdac9b) from Danio rerio (Zebrafish).